Reading from the N-terminus, the 183-residue chain is Ubiquitin-conjugating enzyme E2 H (183 aa).

One can recognise a UBC core domain in the interval 1–150 (MSSPSPGKRR…IKEYIQKYAT (150 aa)). Position 60 is an N6-acetyllysine (lysine 60). Cysteine 87 serves as the catalytic Glycyl thioester intermediate. The disordered stretch occupies residues 152 to 183 (EALKEQEEGTGDSSSESSMSDFSEDEAQDMEL). Low complexity predominate over residues 163 to 172 (DSSSESSMSD). Residues 173-183 (FSEDEAQDMEL) show a composition bias toward acidic residues.

This sequence belongs to the ubiquitin-conjugating enzyme family. In terms of assembly, interacts with MAEA and WDR26, components of the CTLH complex that contains GID4, RANBP9 and/or RANBP10, MKLN1, MAEA, RMND5A (or alternatively its paralog RMND5B), GID8, ARMC8, WDR26 and YPEL5. Autoubiquitinated in vitro in the presence of NEDD4L.

The catalysed reaction is S-ubiquitinyl-[E1 ubiquitin-activating enzyme]-L-cysteine + [E2 ubiquitin-conjugating enzyme]-L-cysteine = [E1 ubiquitin-activating enzyme]-L-cysteine + S-ubiquitinyl-[E2 ubiquitin-conjugating enzyme]-L-cysteine.. It catalyses the reaction S-ubiquitinyl-[E1 ubiquitin-activating enzyme]-L-cysteine + [acceptor protein]-L-lysine = [E1 ubiquitin-activating enzyme]-L-cysteine + N(6)-monoubiquitinyl-[acceptor protein]-L-lysine.. It functions in the pathway protein modification; protein ubiquitination. Accepts ubiquitin from the E1 complex and catalyzes its covalent attachment to other proteins. E2 ubiquitin conjugating enzyme that transfers ubiquitin to MAEA, a core component of the CTLH E3 ubiquitin-protein ligase complex. In vitro catalyzes 'Lys-11'- and 'Lys-48'-linked polyubiquitination. Capable, in vitro, to ubiquitinate histone H2A. This chain is Ubiquitin-conjugating enzyme E2 H (UBE2H), found in Homo sapiens (Human).